We begin with the raw amino-acid sequence, 545 residues long: Probable bifunctional tRNA threonylcarbamoyladenosine biosynthesis protein (545 aa).

A kae1 region spans residues 1-329 (MKNTFILGIE…YRTDDVKVTW (329 aa)). Residues His113, His117, and Tyr134 each coordinate Fe cation. L-threonylcarbamoyladenylate-binding positions include 134 to 138 (YVSGA), Asp166, Gly179, Glu183, and Asn262. Position 290 (Asp290) interacts with Fe cation. The 206-residue stretch at 340–545 (EISPGTSLKL…EEIKKRARYA (206 aa)) folds into the Protein kinase domain. ATP-binding positions include 353-361 (LDNGAEAIV) and Lys375. The active-site Proton acceptor; for kinase activity is Asp462.

The protein in the N-terminal section; belongs to the KAE1 / TsaD family. This sequence in the C-terminal section; belongs to the protein kinase superfamily. Tyr protein kinase family. BUD32 subfamily. As to quaternary structure, component of the KEOPS complex that consists of Kae1, Bud32, Cgi121 and Pcc1; the whole complex dimerizes. The cofactor is Fe(2+).

The protein resides in the cytoplasm. It carries out the reaction L-seryl-[protein] + ATP = O-phospho-L-seryl-[protein] + ADP + H(+). It catalyses the reaction L-threonyl-[protein] + ATP = O-phospho-L-threonyl-[protein] + ADP + H(+). The enzyme catalyses L-threonylcarbamoyladenylate + adenosine(37) in tRNA = N(6)-L-threonylcarbamoyladenosine(37) in tRNA + AMP + H(+). Required for the formation of a threonylcarbamoyl group on adenosine at position 37 (t(6)A37) in tRNAs that read codons beginning with adenine. Is a component of the KEOPS complex that is probably involved in the transfer of the threonylcarbamoyl moiety of threonylcarbamoyl-AMP (TC-AMP) to the N6 group of A37. The Kae1 domain likely plays a direct catalytic role in this reaction. The Bud32 domain probably displays kinase activity that regulates Kae1 function. This Methanosarcina barkeri (strain Fusaro / DSM 804) protein is Probable bifunctional tRNA threonylcarbamoyladenosine biosynthesis protein.